The sequence spans 243 residues: Triosephosphate isomerase (243 aa).

9-11 (NWK) is a substrate binding site. His96 functions as the Electrophile in the catalytic mechanism. Residue Glu165 is the Proton acceptor of the active site. Substrate-binding positions include Gly171, Ser204, and 225-226 (GG).

Belongs to the triosephosphate isomerase family. In terms of assembly, homodimer.

It is found in the cytoplasm. The enzyme catalyses D-glyceraldehyde 3-phosphate = dihydroxyacetone phosphate. Its pathway is carbohydrate biosynthesis; gluconeogenesis. It participates in carbohydrate degradation; glycolysis; D-glyceraldehyde 3-phosphate from glycerone phosphate: step 1/1. In terms of biological role, involved in the gluconeogenesis. Catalyzes stereospecifically the conversion of dihydroxyacetone phosphate (DHAP) to D-glyceraldehyde-3-phosphate (G3P). In Synechococcus sp. (strain WH7803), this protein is Triosephosphate isomerase.